The following is a 289-amino-acid chain: uncharacterized protein (289 aa).

A signal peptide spans 1 to 19 (MAKWLGAPLARGVSTATRA). 2 helical membrane passes run 90 to 110 (GLLA…GWGV) and 257 to 277 (AALS…LVFA).

It localises to the cell membrane. This is an uncharacterized protein from Mycobacterium tuberculosis (strain ATCC 25618 / H37Rv).